The sequence spans 455 residues: Probable glycine dehydrogenase (decarboxylating) subunit 1 (455 aa).

The protein belongs to the GcvP family. N-terminal subunit subfamily. In terms of assembly, the glycine cleavage system is composed of four proteins: P, T, L and H. In this organism, the P 'protein' is a heterodimer of two subunits.

It catalyses the reaction N(6)-[(R)-lipoyl]-L-lysyl-[glycine-cleavage complex H protein] + glycine + H(+) = N(6)-[(R)-S(8)-aminomethyldihydrolipoyl]-L-lysyl-[glycine-cleavage complex H protein] + CO2. Functionally, the glycine cleavage system catalyzes the degradation of glycine. The P protein binds the alpha-amino group of glycine through its pyridoxal phosphate cofactor; CO(2) is released and the remaining methylamine moiety is then transferred to the lipoamide cofactor of the H protein. The chain is Probable glycine dehydrogenase (decarboxylating) subunit 1 from Francisella philomiragia subsp. philomiragia (strain ATCC 25017 / CCUG 19701 / FSC 153 / O#319-036).